The following is a 60-amino-acid chain: Homeobox protein EgHBX4 (60 aa).

Residues 1-60 constitute a DNA-binding region (homeobox); sequence SRRERTIYTPEQLEAMEEVFGVNRYPDVSMREELASRLGINESKIQVWFKNRRAKLRNLE.

Belongs to the paired homeobox family. Bicoid subfamily.

It is found in the nucleus. The sequence is that of Homeobox protein EgHBX4 (HBX4) from Echinococcus granulosus (Hydatid tapeworm).